The chain runs to 851 residues: Phosphatidate phosphatase LPIN3 (851 aa).

The segment at 1 to 108 (MNYVGQLAET…VPPGLCTSPI (108 aa)) is N-LIP. Disordered stretches follow at residues 114 to 385 (SGFP…YLDD) and 400 to 432 (QSDS…EPTL). The segment covering 140–151 (GRRKRRRRRKPK) has biased composition (basic residues). The short motif at 141–148 (RRKRRRRR) is the Nuclear localization signal element. Residue threonine 159 is modified to Phosphothreonine. 3 positions are modified to phosphoserine: serine 161, serine 162, and serine 224. Residues 268–286 (GRAGATSPPRGGPSTPSTS) show a composition bias toward low complexity. Residues 418–429 (SLRDPNPEHEPE) are compositionally biased toward basic and acidic residues. Serine 463 is subject to Phosphoserine. A compositionally biased stretch (basic and acidic residues) spans 542 to 559 (SAQKEKTAAKEQQGEKTE). Positions 542–591 (SAQKEKTAAKEQQGEKTEVLSSDDDAPDSPVILEIPSLPPSTPPSTPTYK) are disordered. The segment covering 578 to 587 (SLPPSTPPST) has biased composition (pro residues). A C-LIP region spans residues 590–792 (YKKSLRLSSD…RIFTVNPRGE (203 aa)). The short motif at 644-648 (DIDGT) is the DXDXT motif element. The LXXIL motif signature appears at 655-659 (LGHIL).

This sequence belongs to the lipin family. Mg(2+) serves as cofactor. Significant expression in intestine and other regions of the gastrointestinal tract.

It localises to the nucleus. The catalysed reaction is a 1,2-diacyl-sn-glycero-3-phosphate + H2O = a 1,2-diacyl-sn-glycerol + phosphate. Inhibited by N-ethylmaleimide. Magnesium-dependent phosphatidate phosphatase enzyme which catalyzes the conversion of phosphatidic acid to diacylglycerol during triglyceride, phosphatidylcholine and phosphatidylethanolamine biosynthesis therefore regulates fatty acid metabolism. The sequence is that of Phosphatidate phosphatase LPIN3 from Homo sapiens (Human).